We begin with the raw amino-acid sequence, 215 residues long: MNYASPRHAGPLDALLIEVDRALQVLSRSAVAGRAYPAHAAEAPLADTEKRHAAGLMRVNHVGEICAQALYRGQAVACRDAGTRELLREAAAEEVDHLVWCDRRLKELDSRPSLLNPLWYAGSFALGVAASVAGVPRNLGFMAETERQVEAHLDEHLRTLPAADERSREIVRQMKDDEAGHRESAERAGGIPLPAPVRGIMRAMSKVMTGTAYRL.

Glutamate 64, glutamate 94, histidine 97, glutamate 146, glutamate 178, and histidine 181 together coordinate Fe cation.

It belongs to the COQ7 family. It depends on Fe cation as a cofactor.

The protein resides in the cell membrane. The enzyme catalyses a 5-methoxy-2-methyl-3-(all-trans-polyprenyl)benzene-1,4-diol + AH2 + O2 = a 3-demethylubiquinol + A + H2O. The protein operates within cofactor biosynthesis; ubiquinone biosynthesis. In terms of biological role, catalyzes the hydroxylation of 2-nonaprenyl-3-methyl-6-methoxy-1,4-benzoquinol during ubiquinone biosynthesis. This Bordetella avium (strain 197N) protein is 3-demethoxyubiquinol 3-hydroxylase.